The following is a 186-amino-acid chain: Ribosome-recycling factor (186 aa).

Composition is skewed to basic and acidic residues over residues 134 to 169 (RDANKAAETAEKDKEMTEDDRDKTKDQVQELTKKAE) and 176 to 186 (AKAREAEVMED). A disordered region spans residues 134–186 (RDANKAAETAEKDKEMTEDDRDKTKDQVQELTKKAETNVNESAKAREAEVMED).

The protein belongs to the RRF family.

The protein resides in the cytoplasm. In terms of biological role, responsible for the release of ribosomes from messenger RNA at the termination of protein biosynthesis. May increase the efficiency of translation by recycling ribosomes from one round of translation to another. This chain is Ribosome-recycling factor, found in Rhodopirellula baltica (strain DSM 10527 / NCIMB 13988 / SH1).